The chain runs to 81 residues: ATP synthase subunit c (81 aa).

A run of 2 helical transmembrane segments spans residues 7–27 (AASV…PGIG) and 57–77 (LAFM…LLFA).

Belongs to the ATPase C chain family. As to quaternary structure, F-type ATPases have 2 components, F(1) - the catalytic core - and F(0) - the membrane proton channel. F(1) has five subunits: alpha(3), beta(3), gamma(1), delta(1), epsilon(1). F(0) has four main subunits: a(1), b(1), b'(1) and c(10-14). The alpha and beta chains form an alternating ring which encloses part of the gamma chain. F(1) is attached to F(0) by a central stalk formed by the gamma and epsilon chains, while a peripheral stalk is formed by the delta, b and b' chains.

The protein localises to the cellular thylakoid membrane. Its function is as follows. F(1)F(0) ATP synthase produces ATP from ADP in the presence of a proton or sodium gradient. F-type ATPases consist of two structural domains, F(1) containing the extramembraneous catalytic core and F(0) containing the membrane proton channel, linked together by a central stalk and a peripheral stalk. During catalysis, ATP synthesis in the catalytic domain of F(1) is coupled via a rotary mechanism of the central stalk subunits to proton translocation. In terms of biological role, key component of the F(0) channel; it plays a direct role in translocation across the membrane. A homomeric c-ring of between 10-14 subunits forms the central stalk rotor element with the F(1) delta and epsilon subunits. This is ATP synthase subunit c from Synechococcus sp. (strain CC9902).